The sequence spans 150 residues: Mating pheromone 1 (150 aa).

A signal peptide spans 1–16 (MKAIFIILAILMVTQA). The propeptide occupies 17-52 (FKMTSKVNTKLQSQIQSKFQSKNKLASTFQTSSKLK).

It is found in the secreted. Mating ciliate pheromones (or gamones) are diffusible extracellular communication signals that distinguish different intraspecific classes of cells commonly referred to as 'mating types'. They prepare the latter for conjugation by changing their cell surface properties. This Euplotoides octocarinatus (Freshwater ciliate) protein is Mating pheromone 1.